A 179-amino-acid chain; its full sequence is MPSKSLVMEYLAHPSTLGLAVGVACGMCLGWSLRVCFGMLPKSKTSKTHTDTESEASILGDSGEYKMILVVRNDLKMGKGKVAAQCSHAAVSAYKQIQRRNPEMLKQWEYCGQPKVVVKAPDEETLIALLAHAKMLGLTVSLIQDAGRTQIAPGSQTVLGIGPGPADLIDKVTGHLKLY.

A helical membrane pass occupies residues 15–37; sequence STLGLAVGVACGMCLGWSLRVCF. Residues K47, K76, K81, K95, K106, K115, K171, and K177 each participate in a glycyl lysine isopeptide (Lys-Gly) (interchain with G-Cter in ubiquitin) cross-link.

This sequence belongs to the PTH2 family. In terms of assembly, monomer. Ubiquitinated by PRKN during mitophagy, leading to its degradation and enhancement of mitophagy. Deubiquitinated by USP30.

Its subcellular location is the mitochondrion outer membrane. It catalyses the reaction an N-acyl-L-alpha-aminoacyl-tRNA + H2O = an N-acyl-L-amino acid + a tRNA + H(+). Peptidyl-tRNA hydrolase which releases tRNAs from the ribosome during protein synthesis. Promotes caspase-independent apoptosis by regulating the function of two transcriptional regulators, AES and TLE1. This is Peptidyl-tRNA hydrolase 2, mitochondrial (PTRH2) from Homo sapiens (Human).